The sequence spans 363 residues: UDP-3-O-acylglucosamine N-acyltransferase (363 aa).

Catalysis depends on His-252, which acts as the Proton acceptor.

It belongs to the transferase hexapeptide repeat family. LpxD subfamily. As to quaternary structure, homotrimer.

The catalysed reaction is a UDP-3-O-[(3R)-3-hydroxyacyl]-alpha-D-glucosamine + a (3R)-hydroxyacyl-[ACP] = a UDP-2-N,3-O-bis[(3R)-3-hydroxyacyl]-alpha-D-glucosamine + holo-[ACP] + H(+). Its pathway is bacterial outer membrane biogenesis; LPS lipid A biosynthesis. Catalyzes the N-acylation of UDP-3-O-acylglucosamine using 3-hydroxyacyl-ACP as the acyl donor. Is involved in the biosynthesis of lipid A, a phosphorylated glycolipid that anchors the lipopolysaccharide to the outer membrane of the cell. This is UDP-3-O-acylglucosamine N-acyltransferase from Cupriavidus necator (strain ATCC 17699 / DSM 428 / KCTC 22496 / NCIMB 10442 / H16 / Stanier 337) (Ralstonia eutropha).